The following is a 273-amino-acid chain: uncharacterized protein (273 aa).

Belongs to the ycf23 family.

The protein resides in the plastid. The protein localises to the chloroplast. This is an uncharacterized protein from Pyropia yezoensis (Susabi-nori).